We begin with the raw amino-acid sequence, 1210 residues long: MGPEMRLTRICCCCCLLYQLGFLSHGTTSGLQLTPDLEEWEVVFPALWRRESLNATGLSGGSSDPGSGRSSGGGGRGQASGSSREVRSVARAPQEEATRGQSEPWFGSPLEPGAEDEEELESQELPRGSSGDTALSSGTPASWQPPLPPQRPSSPPPAQQEEPSAEEVLLRIPALSRDLYLLLRRDGRFLAQRFAVEQWPKPGPDPTRATADPGSSLLPDASCFYTGTVLRHPGSLASFSTCGGGLMGFIQLNEDFLFIEPFNDTMAIIGHPHRLYRQKRSTEEKVTENSAVHRHHCGVISDKGRPRSKKIADNRREKRYSYKLSQEYNIETVVVADPAMVSYHGADAARRFILTILNMVFNLFQHKSLGVQVNLRVLKLILLHETPADLYIGHHGEKMLESFCKWQHEEFGRRNDVHLEMSTSWGEDIAAVDAAILITRKDFCVHKDEPCDTVGIAYLNGMCSEKRKCIIAEDNGLNLAFTIAHEMGHNMGINHDNDHPSCADGLHIMSGEWIKGQNLGDVSWSRCSKEDLERFLRSKASSCLLHTDPQSLSSVLVPSKLPGMAYTADEQCQILFGPLASFCQEMQHVICTGLWCKVEGEAECRTKLDPPMDGTDCDPGKWCKAGECTRRTPAPEHLAGEWSPWSSCSRSCSSGVSSRERKCPGLGSEARDCNGPRKQYRICENPPCPAGLPGFRDWQCQAYSVRTSYPKHALQWQAVFDEEKPCALFCSPVGKEQPVLLSEKVMDGTSCGYQGLDICANGRCQKAGCDGLLGSLAREDHCGVCNGNGKSCKVIKGDFNHTRGAGYVEVLVIPAGARRIKVVEEKPAHSFLALRDASKQSINSDWKIEHSGAFSLAGTTVHYLRRGLWEKISAKGPTTTPLHLLVLLFQDQNYGLHYEYTVPSDPLPDNQSSKEPGPLFMWTHAGWGDCNATCGGGERKTMVSCTKIMSKNISLVDNKKCKDLTKPEPQIRKCNEQPCQTRWMMTEWTTCSRTCGKGVQSRQVACTQQLENGTLIRAWERDCLGPKPATVQRCEGQDCMTVWEAGVWSECSVKCGKGVRHRTVRCTNPRKKCVLSTRPREAEDCEDYSKCYVWRVGDWSKCSITCGKGMQSRVIQCMHKITGRHGNECFSSEKPAAYRPCHLQPCNEKINVNTITSPRLAALTFKCLGDQWPVYCRVIREKNLCQDMRWYQRCCETCRDFYAQKLQQKS.

The first 30 residues, 1-30, serve as a signal peptide directing secretion; sequence MGPEMRLTRICCCCCLLYQLGFLSHGTTSG. Positions 31-319 are excised as a propeptide; the sequence is LQLTPDLEEW…KIADNRREKR (289 aa). N54 is a glycosylation site (N-linked (GlcNAc...) asparagine). A disordered region spans residues 55 to 166; sequence ATGLSGGSSD…PAQQEEPSAE (112 aa). Positions 69 to 78 are enriched in gly residues; it reads RSSGGGGRGQ. A compositionally biased stretch (basic and acidic residues) spans 84 to 98; the sequence is REVRSVARAPQEEAT. Residues 113 to 122 show a composition bias toward acidic residues; that stretch reads GAEDEEELES. Polar residues predominate over residues 130 to 139; it reads SGDTALSSGT. Positions 143 to 158 are enriched in pro residues; sequence WQPPLPPQRPSSPPPA. Residue N263 is glycosylated (N-linked (GlcNAc...) asparagine). Residues 295–302 carry the Cysteine switch motif; the sequence is HHCGVISD. C297 contacts Zn(2+). In terms of domain architecture, Peptidase M12B spans 328-548; sequence YNIETVVVAD…KASSCLLHTD (221 aa). Cystine bridges form between C404/C469, C444/C451, C463/C543, C502/C527, C572/C596, C583/C604, C591/C623, C617/C628, C648/C683, C652/C688, and C663/C673. Residue H485 participates in Zn(2+) binding. The active site involves E486. Residues H489 and H495 each contribute to the Zn(2+) site. In terms of domain architecture, Disintegrin spans 549-636; it reads PQSLSSVLVP…ECTRRTPAPE (88 aa). The 53-residue stretch at 637–689 folds into the TSP type-1 1 domain; that stretch reads HLAGEWSPWSSCSRSCSSGVSSRERKCPGLGSEARDCNGPRKQYRICENPPCP. The spacer stretch occupies residues 794–917; sequence VIKGDFNHTR…PDNQSSKEPG (124 aa). N800, N910, N931, N952, and N1012 each carry an N-linked (GlcNAc...) asparagine glycan. TSP type-1 domains are found at residues 918–978, 979–1040, 1042–1086, and 1090–1147; these read PLFM…NEQP, CQTR…QDCM, VWEA…EDCE, and KCYV…QPCN. Cystine bridges form between C991–C1034, C995–C1039, and C1006–C1023. Residues 1163–1202 form the PLAC domain; that stretch reads LTFKCLGDQWPVYCRVIREKNLCQDMRWYQRCCETCRDFY.

Requires Zn(2+) as cofactor. Post-translationally, the precursor is cleaved by a furin endopeptidase. In terms of processing, glycosylated. Can be O-fucosylated by POFUT2 on a serine or a threonine residue found within the consensus sequence C1-X(2)-(S/T)-C2-G of the TSP type-1 repeat domains where C1 and C2 are the first and second cysteine residue of the repeat, respectively. Fucosylated repeats can then be further glycosylated by the addition of a beta-1,3-glucose residue by the glucosyltransferase, B3GALTL. Fucosylation mediates the efficient secretion of ADAMTS family members. Can also be C-glycosylated with one or two mannose molecules on tryptophan residues within the consensus sequence W-X-X-W of the TPRs, and N-glycosylated. These other glycosylations can also facilitate secretion. Expressed predominantly in fetal ovary, low levels of expression is also detected in kidney, heart, skeletal muscle, lung and testis.

Its subcellular location is the secreted. It localises to the extracellular space. The protein resides in the extracellular matrix. The sequence is that of A disintegrin and metalloproteinase with thrombospondin motifs 19 (Adamts19) from Mus musculus (Mouse).